The sequence spans 193 residues: Alpha-S2-casein (193 aa).

A signal peptide spans 1-15 (MKFFIFTCLLAVVLA). Phosphoserine is present on residues Ser23, Ser24, Ser25, Ser28, Ser47, Ser68, Ser123, Ser125, Ser128, and Ser136.

It belongs to the alpha-casein family. In terms of tissue distribution, mammary gland specific. Secreted in milk.

The protein resides in the secreted. Important role in the capacity of milk to transport calcium phosphate. In Camelus dromedarius (Dromedary), this protein is Alpha-S2-casein (CSN1S2).